The sequence spans 788 residues: Elongator complex protein 2 (788 aa).

8 WD repeats span residues Gly13–Val51, Gly57–Cys96, His102–Gly139, Gly200–Asp243, Gly279–Val318, Gly336–Gln377, Gly383–Arg422, and Ile437–Leu475. Residues Pro490–Leu530 are disordered. Ser492 is modified (phosphoserine). Residues Asp507–Glu517 show a composition bias toward acidic residues. WD repeat units follow at residues Gly556 to Pro600, Phe604 to Glu643, Pro651 to Tyr692, Lys699 to Ile742, and Thr750 to Glu788.

It belongs to the WD repeat ELP2 family. Component of the elongator complex which consists of ELP1/IKI3, ELP2, ELP3, ELP4, ELP5/IKI1 and ELP6. The elongator complex is composed of two copies of the Elp123 subcomplex (composed of ELP1/IKI3, ELP2 and ELP3) and two copies of the Elp456 subcomplex (composed of ELP4, ELP5/IKI1 and ELP6). The Elp123 subcomplex forms a two-lobed scaffold, which binds the Elp456 subcomplex asymmetrically. In the complex, ELP2 interacts with ELP1/IKI3. In each lobe, ELP2 is tightly sandwiched between ELP1/IKI3 and ELP3. The Elp123 subcomplex binds tRNA through ELP1/IKI3 and ELP3 and can bind 2 tRNAs simultaneously. tRNA-binding induces conformational rearrangements which precisely position the targeted anticodon base in the active site. The Elp456 subcomplex binds tRNA and has ATPase activity. Interacts with KTI11/DPH3.

The protein resides in the cytoplasm. It is found in the nucleus. The protein operates within tRNA modification; 5-methoxycarbonylmethyl-2-thiouridine-tRNA biosynthesis. In terms of biological role, component of the elongator complex, a multiprotein complex which is required for multiple tRNA modifications, including mcm5U (5-methoxycarbonylmethyl uridine), mcm5s2U (5-methoxycarbonylmethyl-2-thiouridine), and ncm5U (5-carbamoylmethyl uridine). The elongator complex catalyzes formation of carboxymethyluridine in the wobble base at position 34 in tRNAs. It functions as a gamma-toxin target (TOT); disruption of the complex confers resistance to Kluyveromyces lactis toxin zymocin (pGKL1 killer toxin). May also be involved in sensitivity to Pichia inositovora toxin. ELP2 binds to microtubules. Independently, ELP2 may be involved in polarized exocytosis. The protein is Elongator complex protein 2 (ELP2) of Saccharomyces cerevisiae (strain ATCC 204508 / S288c) (Baker's yeast).